A 375-amino-acid polypeptide reads, in one-letter code: Dual specificity protein phosphatase 4 (375 aa).

One can recognise a Rhodanese domain in the interval Ser-25–Ala-143. In terms of domain architecture, Tyrosine-protein phosphatase spans Gly-176–Ala-317. Cys-261 (phosphocysteine intermediate) is an active-site residue.

It belongs to the protein-tyrosine phosphatase family. Non-receptor class dual specificity subfamily.

The protein localises to the nucleus. The catalysed reaction is O-phospho-L-tyrosyl-[protein] + H2O = L-tyrosyl-[protein] + phosphate. The enzyme catalyses O-phospho-L-seryl-[protein] + H2O = L-seryl-[protein] + phosphate. It catalyses the reaction O-phospho-L-threonyl-[protein] + H2O = L-threonyl-[protein] + phosphate. In terms of biological role, regulates mitogenic signal transduction by dephosphorylating both Thr and Tyr residues on MAP kinases ERK1 and ERK2. The chain is Dual specificity protein phosphatase 4 (DUSP4) from Gallus gallus (Chicken).